We begin with the raw amino-acid sequence, 94 residues long: uncharacterized protein (94 aa).

It to M.tuberculosis Rv2632c.

This is an uncharacterized protein from Mycobacterium tuberculosis (strain CDC 1551 / Oshkosh).